A 160-amino-acid chain; its full sequence is Calcium-binding protein CP1 (160 aa).

EF-hand domains follow at residues 22–49, 52–87, and 93–128; these read AFEI…IPSG, NDET…TPFS, and GDDG…AGLA. Ca(2+) contacts are provided by Asp27, Asp29, Asp31, Lys33, Asp38, Asp65, Asn67, Asp69, Glu76, Asp106, Asp108, Asp110, Arg112, and Asp117.

Expressed in roots and flowers.

Its subcellular location is the cytoplasm. The protein localises to the cytosol. Functionally, binds calcium in vitro. This chain is Calcium-binding protein CP1, found in Arabidopsis thaliana (Mouse-ear cress).